A 179-amino-acid polypeptide reads, in one-letter code: MAKLHDKYQETVVAELAKKFGYSSVMQVPRIEKITLNMGVGEAVADKKVMEHALRDMTAIAGQKPIVTVARKSVAGFKIREGYPIGCKVTLRGERMWEFLERLVDIAIPRIRDFRGLSAKAFDGRGNYAMGVREQIIFPEIDYDKIDKIRGMDIVITTTAKNDEEGRALLDAFNFPFKK.

The protein belongs to the universal ribosomal protein uL5 family. As to quaternary structure, part of the 50S ribosomal subunit; part of the 5S rRNA/L5/L18/L25 subcomplex. Contacts the 5S rRNA and the P site tRNA. Forms a bridge to the 30S subunit in the 70S ribosome.

Functionally, this is one of the proteins that bind and probably mediate the attachment of the 5S RNA into the large ribosomal subunit, where it forms part of the central protuberance. In the 70S ribosome it contacts protein S13 of the 30S subunit (bridge B1b), connecting the 2 subunits; this bridge is implicated in subunit movement. Contacts the P site tRNA; the 5S rRNA and some of its associated proteins might help stabilize positioning of ribosome-bound tRNAs. The polypeptide is Large ribosomal subunit protein uL5 (Shewanella frigidimarina (strain NCIMB 400)).